Here is a 977-residue protein sequence, read N- to C-terminus: Collagen alpha-2(I) chain (977 aa).

Positions 1–977 are disordered; sequence SGGFDFSFLP…RGSQGSQGPS (977 aa). Residues Pro-10, Pro-13, Pro-28, and Pro-34 each carry the 4-hydroxyproline modification. Positions 17-66 are enriched in low complexity; it reads GPMGLMGPRGPPGASGAPGPQGFQGPAGEPGEPGQTGPAGARGPAGPPGK. Residue Lys-91 is modified to 5-hydroxylysine; alternate. Lys-91 carries O-linked (Gal...) hydroxylysine; alternate glycosylation. 2 stretches are compositionally biased toward low complexity: residues 138–159 and 205–226; these read SRGS…SAGP and PGAN…AGAP. Gly residues predominate over residues 258-267; the sequence is GESGGKGEPG. The span at 268–278 shows a compositional bias: low complexity; the sequence is SAGPQGPPGSS. The segment covering 300-309 has biased composition (gly residues); it reads GLRGGPGSRG. Positions 322 to 338 are enriched in low complexity; the sequence is PAGARGASGPAGVRGPS. 4-hydroxyproline occurs at positions 344 and 347. A compositionally biased stretch (low complexity) spans 373–392; that stretch reads LPGIDGRPGPIGPAGARGEA. Gly residues predominate over residues 441–450; sequence GVQGGKGEQG. 2 stretches are compositionally biased toward low complexity: residues 497–514 and 526–536; these read SGES…SRGP and EPGVVGAPGTA. Over residues 537–546 the composition is skewed to gly residues; the sequence is GPAGSGGLPG. 2 stretches are compositionally biased toward low complexity: residues 569-605 and 620-640; these read VGTT…AGPA and VGPA…QPGA. Residues 641-650 are compositionally biased toward basic and acidic residues; sequence KGERGTKGPK. The segment covering 658 to 668 has biased composition (low complexity); the sequence is PTGPVGSAGPA. Gly residues predominate over residues 678–687; it reads GSRGDGGPPG. A compositionally biased stretch (low complexity) spans 689–698; it reads TGFPGAAGRT. Residues 735 to 744 show a composition bias toward gly residues; the sequence is GETGAGGPPG. Low complexity-rich tracts occupy residues 752-779 and 787-797; these read SGEP…LGLP and LPGVAGAVGEP. A compositionally biased stretch (gly residues) spans 798–817; that stretch reads GPLGIGPPGARGPSGAGVNG. 2 stretches are compositionally biased toward low complexity: residues 853 to 871 and 878 to 898; these read PVGA…PAGK and PGPA…PSGP. Residues 902–913 are compositionally biased toward basic and acidic residues; the sequence is RGDKGEAGDKGP.

This sequence belongs to the fibrillar collagen family. Trimers of one alpha 2(I) and two alpha 1(I) chains. Interacts (via C-terminus) with TMEM131 (via PapD-L domain); the interaction is direct and is involved in assembly and TRAPPIII ER-to-Golgi transport complex-dependent secretion of collagen. In terms of processing, prolines at the third position of the tripeptide repeating unit (G-X-Y) are hydroxylated in some or all of the chains. As to expression, expressed in bones.

It is found in the secreted. The protein localises to the extracellular space. The protein resides in the extracellular matrix. Type I collagen is a member of group I collagen (fibrillar forming collagen). In Scelidodon sp. (strain SLP-2019) (South American ground sloth), this protein is Collagen alpha-2(I) chain.